Here is a 188-residue protein sequence, read N- to C-terminus: ATP synthase subunit b 1 (188 aa).

The chain crosses the membrane as a helical span at residues 35–55 (VHFGSHLFWLAISFGLFYLFI).

It belongs to the ATPase B chain family. As to quaternary structure, F-type ATPases have 2 components, F(1) - the catalytic core - and F(0) - the membrane proton channel. F(1) has five subunits: alpha(3), beta(3), gamma(1), delta(1), epsilon(1). F(0) has three main subunits: a(1), b(2) and c(10-14). The alpha and beta chains form an alternating ring which encloses part of the gamma chain. F(1) is attached to F(0) by a central stalk formed by the gamma and epsilon chains, while a peripheral stalk is formed by the delta and b chains.

Its subcellular location is the cell inner membrane. F(1)F(0) ATP synthase produces ATP from ADP in the presence of a proton or sodium gradient. F-type ATPases consist of two structural domains, F(1) containing the extramembraneous catalytic core and F(0) containing the membrane proton channel, linked together by a central stalk and a peripheral stalk. During catalysis, ATP synthesis in the catalytic domain of F(1) is coupled via a rotary mechanism of the central stalk subunits to proton translocation. In terms of biological role, component of the F(0) channel, it forms part of the peripheral stalk, linking F(1) to F(0). In Bartonella henselae (strain ATCC 49882 / DSM 28221 / CCUG 30454 / Houston 1) (Rochalimaea henselae), this protein is ATP synthase subunit b 1.